We begin with the raw amino-acid sequence, 646 residues long: Type III restriction-modification enzyme EcoPI Mod subunit (646 aa).

The tract at residues 123 to 126 (DPPY) is binding of S-adenosyl methionine.

This sequence belongs to the N(4)/N(6)-methyltransferase family. As to quaternary structure, homodimer. A heterotetramer with stoichiometry Res(2)Mod(2).

It catalyses the reaction a 2'-deoxyadenosine in DNA + S-adenosyl-L-methionine = an N(6)-methyl-2'-deoxyadenosine in DNA + S-adenosyl-L-homocysteine + H(+). In terms of biological role, a beta subtype methylase that binds the system-specific DNA recognition site 5'-AGACC-3' and methylates A-3 (of only 1 strand as the other does not have an A residue). DNA restriction requires both the Res and Mod subunits. The chain is Type III restriction-modification enzyme EcoPI Mod subunit from Enterobacteriaceae (Bacteriophage P1).